The sequence spans 121 residues: Cell division protein FtsL (121 aa).

Over 1 to 34 the chain is Cytoplasmic; it reads MISRVTEALSKVKGSMGSHERHALPGVIGDDLLR. A helical transmembrane segment spans residues 35 to 57; the sequence is FGKLPLCLFICIILTAVTVVTTA. Over 58–121 the chain is Periplasmic; that stretch reads HHTRLLTAQR…PSQENIVVQK (64 aa).

This sequence belongs to the FtsL family. As to quaternary structure, part of a complex composed of FtsB, FtsL and FtsQ.

It is found in the cell inner membrane. Functionally, essential cell division protein. May link together the upstream cell division proteins, which are predominantly cytoplasmic, with the downstream cell division proteins, which are predominantly periplasmic. The chain is Cell division protein FtsL from Shigella dysenteriae serotype 1 (strain Sd197).